A 408-amino-acid chain; its full sequence is PCI domain-containing protein 2 (408 aa).

Alanine 2 is modified (N-acetylalanine). Phosphoserine is present on serine 45. Residues valine 210–proline 400 form the PCI domain.

It belongs to the CSN12 family. As to quaternary structure, component of the nuclear pore complex (NPC)-associated TREX-2 complex (transcription and export complex 2), composed of at least GANP, 2 copies of ENY2, PCID2, SEM1/DSS1, and either centrin CETN2 or centrin CETN3. The TREX-2 complex also associates with ALYREF/ALY and with the nucleoporin NUP153. Interacts with BRCA2. Interacts with SRCAP chromatin remodeling complex component ZNHIT1; the interaction results in inhibition of SRCAP complex activity, preventing the deposition of histone variant H2AZ1/H2A.Z to lymphoid fate regulator genes and restricting lymphoid lineage commitment.

The protein resides in the cytoplasm. It localises to the nucleus. It is found in the nuclear pore complex. Its function is as follows. Required for B-cell survival through the regulation of the expression of cell-cycle checkpoint MAD2L1 protein during B cell differentiation. As a component of the TREX-2 complex, involved in the export of mRNAs to the cytoplasm through the nuclear pores. Binds and stabilizes BRCA2 and is thus involved in the control of R-loop-associated DNA damage and transcription-associated genomic instability. Blocks the activity of the SRCAP chromatin remodeling complex by interacting with SRCAP complex member ZNHIT1 and inhibiting its interaction with the complex. This prevents the deposition of histone variant H2AZ1/H2A.Z at the nucleosomes of key lymphoid fate regulator genes which suppresses their expression and restricts lymphoid lineage commitment. The sequence is that of PCI domain-containing protein 2 (PCID2) from Bos taurus (Bovine).